The primary structure comprises 110 residues: UPF0060 membrane protein PBPRB0495 (110 aa).

The next 4 helical transmembrane spans lie at 7 to 27 (VGLF…PYLW), 33 to 53 (TIWL…LLTL), 63 to 83 (AAYG…VDGI), and 85 to 105 (PTVW…IIMF).

The protein belongs to the UPF0060 family.

It is found in the cell inner membrane. This is UPF0060 membrane protein PBPRB0495 from Photobacterium profundum (strain SS9).